The primary structure comprises 389 residues: MSRTLILAEQLISRPSVTPEDAGCLELLAGRLAPLGFTCERMDSGPDSFRVSNLWARRAAAGGGAPARTLVFAGHTDVVPTGPPEQWSSPPFTPSHRDGRLYGRGASDMKTSIAAFVVAVEEFLAATPEPAIALAFLLTSDEEGPSVDGTKVVVEQLAARGETLDWCIVGEPTSVRKTGDMIKNGRRGTLSGKLTVRGIQGHIAYPQLARNPIHQALPALAELAATEWDRGNDFFPPTSWQISNIHGGTGATNVIPGTVVVDFNFRFCTESTAEGLKTRVHNLLDRHGLEYDLTWTLGGQPFLTTPGELVAAVQQAITDETGITTELSTTGGTSDGRFIARVCPQVIELGPPNATIHKIDEHVVIADVEPLKNIYRRTLERLNAQAAAA.

Histidine 75 serves as a coordination point for Zn(2+). Aspartate 77 is an active-site residue. Aspartate 108 contributes to the Zn(2+) binding site. Catalysis depends on glutamate 142, which acts as the Proton acceptor. Zn(2+)-binding residues include glutamate 143, glutamate 171, and histidine 357.

Belongs to the peptidase M20A family. DapE subfamily. As to quaternary structure, homodimer. Zn(2+) serves as cofactor. Co(2+) is required as a cofactor.

It catalyses the reaction N-succinyl-(2S,6S)-2,6-diaminopimelate + H2O = (2S,6S)-2,6-diaminopimelate + succinate. It functions in the pathway amino-acid biosynthesis; L-lysine biosynthesis via DAP pathway; LL-2,6-diaminopimelate from (S)-tetrahydrodipicolinate (succinylase route): step 3/3. Catalyzes the hydrolysis of N-succinyl-L,L-diaminopimelic acid (SDAP), forming succinate and LL-2,6-diaminopimelate (DAP), an intermediate involved in the bacterial biosynthesis of lysine and meso-diaminopimelic acid, an essential component of bacterial cell walls. This chain is Succinyl-diaminopimelate desuccinylase, found in Paracidovorax citrulli (strain AAC00-1) (Acidovorax citrulli).